The chain runs to 699 residues: Cysteine--tRNA ligase (699 aa).

The unknown stretch occupies residues 1–226 (MTTITEKRLT…SEQQRLIHNP (226 aa)). A Zn(2+)-binding site is contributed by C254. The 'HIGH' region motif lies at 256-266 (MTVYDYCHLGH). Zn(2+) contacts are provided by C435, H460, and E464. The 'KMSKS' region signature appears at 508-512 (KMSKS). K511 contacts ATP.

This sequence belongs to the class-I aminoacyl-tRNA synthetase family. In terms of assembly, monomer. Requires Zn(2+) as cofactor.

The protein localises to the cytoplasm. The catalysed reaction is tRNA(Cys) + L-cysteine + ATP = L-cysteinyl-tRNA(Cys) + AMP + diphosphate. The polypeptide is Cysteine--tRNA ligase (cysS) (Neisseria meningitidis serogroup A / serotype 4A (strain DSM 15465 / Z2491)).